Consider the following 381-residue polypeptide: Flap endonuclease 1 (381 aa).

Residues 1 to 105 (MGIKNLATLI…YELDKRKVRR (105 aa)) form an N-domain region. Aspartate 34 is a Mg(2+) binding site. Residues arginine 47 and arginine 71 each coordinate DNA. Residues aspartate 87, glutamate 156, glutamate 158, aspartate 177, and aspartate 179 each contribute to the Mg(2+) site. The I-domain stretch occupies residues 120 to 251 (EIIKHERRLV…VNALKLIKEH (132 aa)). Glutamate 156 contacts DNA. Residues glycine 229 and aspartate 231 each contribute to the DNA site. Aspartate 231 contacts Mg(2+). Residues 339–347 (VQKRLDSFF) form an interaction with PCNA region. The tract at residues 360–381 (AAKKAKDAKKKAAAKGKIAKRR) is disordered. Positions 365–381 (KDAKKKAAAKGKIAKRR) are enriched in basic residues.

It belongs to the XPG/RAD2 endonuclease family. FEN1 subfamily. Interacts with PCNA. Three molecules of FEN1 bind to one PCNA trimer with each molecule binding to one PCNA monomer. PCNA stimulates the nuclease activity without altering cleavage specificity. Requires Mg(2+) as cofactor. Phosphorylated. Phosphorylation upon DNA damage induces relocalization to the nuclear plasma.

The protein resides in the nucleus. The protein localises to the nucleolus. Its subcellular location is the nucleoplasm. It is found in the mitochondrion. Its function is as follows. Structure-specific nuclease with 5'-flap endonuclease and 5'-3' exonuclease activities involved in DNA replication and repair. During DNA replication, cleaves the 5'-overhanging flap structure that is generated by displacement synthesis when DNA polymerase encounters the 5'-end of a downstream Okazaki fragment. It enters the flap from the 5'-end and then tracks to cleave the flap base, leaving a nick for ligation. Also involved in the long patch base excision repair (LP-BER) pathway, by cleaving within the apurinic/apyrimidinic (AP) site-terminated flap. Acts as a genome stabilization factor that prevents flaps from equilibrating into structures that lead to duplications and deletions. Also possesses 5'-3' exonuclease activity on nicked or gapped double-stranded DNA, and exhibits RNase H activity. Also involved in replication and repair of rDNA and in repairing mitochondrial DNA. This is Flap endonuclease 1 from Kluyveromyces lactis (strain ATCC 8585 / CBS 2359 / DSM 70799 / NBRC 1267 / NRRL Y-1140 / WM37) (Yeast).